The chain runs to 302 residues: Sulfate adenylyltransferase subunit 2 (302 aa).

Belongs to the PAPS reductase family. CysD subfamily. In terms of assembly, heterodimer composed of CysD, the smaller subunit, and CysN.

The catalysed reaction is sulfate + ATP + H(+) = adenosine 5'-phosphosulfate + diphosphate. It participates in sulfur metabolism; hydrogen sulfide biosynthesis; sulfite from sulfate: step 1/3. Its function is as follows. With CysN forms the ATP sulfurylase (ATPS) that catalyzes the adenylation of sulfate producing adenosine 5'-phosphosulfate (APS) and diphosphate, the first enzymatic step in sulfur assimilation pathway. APS synthesis involves the formation of a high-energy phosphoric-sulfuric acid anhydride bond driven by GTP hydrolysis by CysN coupled to ATP hydrolysis by CysD. The chain is Sulfate adenylyltransferase subunit 2 from Yersinia enterocolitica serotype O:8 / biotype 1B (strain NCTC 13174 / 8081).